The chain runs to 317 residues: Apolipoprotein E (317 aa).

The first 18 residues, 1 to 18 (MKVLWAALLVTFLAGCQA), serve as a signal peptide directing secretion. A run of 8 repeats spans residues 80–101 (ALMD…EQLT), 102–123 (PVAE…ARLG), 124–145 (ADME…AMLG), 146–167 (QSTE…KRLL), 168–189 (RDAD…EGAE), 190–211 (RGVS…VRAA), 212–233 (TVGS…ERLR), and 234–255 (ARME…EQVA). An 8 X 22 AA approximate tandem repeats region spans residues 80-255 (ALMDETMKEL…RLDEVKEQVA (176 aa)). At methionine 143 the chain carries Methionine sulfoxide. Position 147 is a phosphoserine (serine 147). The LDL and other lipoprotein receptors binding stretch occupies residues 158–168 (HLRKLRKRLLR). Position 162–165 (162–165 (LRKR)) interacts with heparin. The tract at residues 210–290 (AATVGSLAGQ…SWFEPLVEDM (81 aa)) is lipid-binding and lipoprotein association. 229–236 (GERLRARM) contacts heparin. A homooligomerization region spans residues 266 to 317 (QQIRLQAEAFQARLKSWFEPLVEDMQRQWAGLVEKVQAAMGTSAAPVPSDNH). Residues 278-290 (RLKSWFEPLVEDM) are specificity for association with VLDL.

It belongs to the apolipoprotein A1/A4/E family. Homotetramer. May interact with ABCA1; functionally associated with ABCA1 in the biogenesis of HDLs. May interact with APP/A4 amyloid-beta peptide; the interaction is extremely stable in vitro but its physiological significance is unclear. May interact with MAPT. May interact with MAP2. In the cerebrospinal fluid, interacts with secreted SORL1. Interacts with PMEL; this allows the loading of PMEL luminal fragment on ILVs to induce fibril nucleation. Post-translationally, APOE exists as multiple glycosylated and sialylated glycoforms within cells and in plasma. The extent of glycosylation and sialylation are tissue and context specific. In terms of processing, glycated in plasma VLDL. Phosphorylated by FAM20C in the extracellular medium.

The protein resides in the secreted. It is found in the extracellular space. Its subcellular location is the extracellular matrix. It localises to the extracellular vesicle. The protein localises to the endosome. The protein resides in the multivesicular body. In terms of biological role, APOE is an apolipoprotein, a protein associating with lipid particles, that mainly functions in lipoprotein-mediated lipid transport between organs via the plasma and interstitial fluids. APOE is a core component of plasma lipoproteins and is involved in their production, conversion and clearance. Apolipoproteins are amphipathic molecules that interact both with lipids of the lipoprotein particle core and the aqueous environment of the plasma. As such, APOE associates with chylomicrons, chylomicron remnants, very low density lipoproteins (VLDL) and intermediate density lipoproteins (IDL) but shows a preferential binding to high-density lipoproteins (HDL). It also binds a wide range of cellular receptors including the LDL receptor/LDLR, the LDL receptor-related proteins LRP1, LRP2 and LRP8 and the very low-density lipoprotein receptor/VLDLR that mediate the cellular uptake of the APOE-containing lipoprotein particles. Finally, APOE also has a heparin-binding activity and binds heparan-sulfate proteoglycans on the surface of cells, a property that supports the capture and the receptor-mediated uptake of APOE-containing lipoproteins by cells. A main function of APOE is to mediate lipoprotein clearance through the uptake of chylomicrons, VLDLs, and HDLs by hepatocytes. APOE is also involved in the biosynthesis by the liver of VLDLs as well as their uptake by peripheral tissues ensuring the delivery of triglycerides and energy storage in muscle, heart and adipose tissues. By participating in the lipoprotein-mediated distribution of lipids among tissues, APOE plays a critical role in plasma and tissues lipid homeostasis. APOE is also involved in two steps of reverse cholesterol transport, the HDLs-mediated transport of cholesterol from peripheral tissues to the liver, and thereby plays an important role in cholesterol homeostasis. First, it is functionally associated with ABCA1 in the biogenesis of HDLs in tissues. Second, it is enriched in circulating HDLs and mediates their uptake by hepatocytes. APOE also plays an important role in lipid transport in the central nervous system, regulating neuron survival and sprouting. The polypeptide is Apolipoprotein E (APOE) (Gorilla gorilla gorilla (Western lowland gorilla)).